The chain runs to 375 residues: Peroxisomal targeting signal 2 receptor (375 aa).

WD repeat units lie at residues 58 to 89, 102 to 133, 172 to 203, 218 to 249, 281 to 312, and 340 to 372; these read LTQD…RLFD, EHER…KIWS, KNRN…SLFD, HSGL…RIWD, AHGL…RIWR, and QHSE…FVWN.

Belongs to the WD repeat peroxin-7 family. In terms of assembly, interacts with PEX21.

Its subcellular location is the cytoplasm. It localises to the cytosol. It is found in the peroxisome matrix. Its function is as follows. Receptor required for the peroxisomal import of proteins containing a C-terminal PTS2-type peroxisomal targeting signal, such as 3-oxoacyl-CoA thiolase. Specifically binds to cargo proteins containing a PTS2 peroxisomal targeting signal in the cytosol. Cargo protein-binding triggers interaction with PEX21 and formation of a ternary complex composed of PEX21 and PEX7 along with PTS2-containing cargo proteins, which is tranlocated into peroxisomes by passing through the PEX13-PEX14 docking complex. The chain is Peroxisomal targeting signal 2 receptor from Saccharomyces cerevisiae (strain ATCC 204508 / S288c) (Baker's yeast).